The sequence spans 177 residues: FCS-Like Zinc finger 1 (177 aa).

Low complexity predominate over residues 22–46 (SLSEMEAGFSGNNNNSNNHGNPQNG). Disordered stretches follow at residues 22 to 49 (SLSE…GVVS) and 134 to 177 (ERDE…VAAA). The FLZ-type zinc-finger motif lies at 96-140 (HFLDSCFLCKKPLGDNRDIYMYRGDTPFCSEECRQEQIERDEAKE). Basic and acidic residues-rich tracts occupy residues 134 to 143 (ERDEAKEKKQ) and 154 to 168 (RRKE…RDYA).

The protein belongs to the FLZ family. In terms of assembly, interacts with KIN10 and KIN11 via its FLZ-type zinc finger domain. Interacts with KINB1, KINB2 and KINB3 via its N-terminal part. Interacts with DSP3 and BBX21 via its FLZ-type zinc finger domain. Forms heterodimer with FLZ7 and FLZ15 in vitro.

The protein resides in the nucleus. It localises to the cytoplasm. In terms of biological role, may act as an adapter to facilitate the interaction of SnRK1 complex with effector proteins, conferring tissue- and stimulus-type specific differences in the SnRK1 regulation pathway. In Arabidopsis thaliana (Mouse-ear cress), this protein is FCS-Like Zinc finger 1.